We begin with the raw amino-acid sequence, 231 residues long: Small ribosomal subunit protein uS5 (231 aa).

A disordered region spans residues 1-63 (MADLENKTVK…KSVDRANKVK (63 aa)). Residues 29–60 (KRTESGAKKQIWEKRSAHDSKDMPKKSVDRAN) show a composition bias toward basic and acidic residues. Residues 75–138 (FSEKVVNISR…KDARNHLISV (64 aa)) form the S5 DRBM domain.

Belongs to the universal ribosomal protein uS5 family. Part of the 30S ribosomal subunit. Contacts proteins S4 and S8.

With S4 and S12 plays an important role in translational accuracy. Functionally, located at the back of the 30S subunit body where it stabilizes the conformation of the head with respect to the body. In Mycoplasmopsis agalactiae (strain NCTC 10123 / CIP 59.7 / PG2) (Mycoplasma agalactiae), this protein is Small ribosomal subunit protein uS5.